The primary structure comprises 259 residues: Proliferating cell nuclear antigen (259 aa).

The DNA-binding element occupies 61–80; sequence RCDRNIALGVNLTSLTKVLR. Residue Lys-164 forms a Glycyl lysine isopeptide (Lys-Gly) (interchain with G-Cter in SUMO); alternate linkage. Lys-164 is covalently cross-linked (Glycyl lysine isopeptide (Lys-Gly) (interchain with G-Cter in ubiquitin); alternate).

The protein belongs to the PCNA family. In terms of assembly, homotrimer. Monoubiquitinated on Lys-164 upon DNA damage, and then polyubiquitinated through 'Lys-63'-linkage.

Its subcellular location is the nucleus. Its function is as follows. This protein is an auxiliary protein of DNA polymerase delta and is involved in the control of eukaryotic DNA replication by increasing the polymerase's processibility during elongation of the leading strand. Involved in DNA repair. In Chaetomium thermophilum (strain DSM 1495 / CBS 144.50 / IMI 039719) (Thermochaetoides thermophila), this protein is Proliferating cell nuclear antigen.